A 329-amino-acid chain; its full sequence is Putative glycosyltransferase CsbB (329 aa).

Transmembrane regions (helical) follow at residues 231–251 and 264–284; these read CFYT…ATFV and FTII…LGII.

Belongs to the glycosyltransferase 2 family. GtrB subfamily.

It localises to the cell membrane. The chain is Putative glycosyltransferase CsbB (csbB) from Bacillus subtilis (strain 168).